A 349-amino-acid chain; its full sequence is S-adenosylmethionine:tRNA ribosyltransferase-isomerase (349 aa).

It belongs to the QueA family. As to quaternary structure, monomer.

It localises to the cytoplasm. The enzyme catalyses 7-aminomethyl-7-carbaguanosine(34) in tRNA + S-adenosyl-L-methionine = epoxyqueuosine(34) in tRNA + adenine + L-methionine + 2 H(+). It participates in tRNA modification; tRNA-queuosine biosynthesis. In terms of biological role, transfers and isomerizes the ribose moiety from AdoMet to the 7-aminomethyl group of 7-deazaguanine (preQ1-tRNA) to give epoxyqueuosine (oQ-tRNA). The sequence is that of S-adenosylmethionine:tRNA ribosyltransferase-isomerase from Ruegeria pomeroyi (strain ATCC 700808 / DSM 15171 / DSS-3) (Silicibacter pomeroyi).